The sequence spans 438 residues: sn-glycerol-3-phosphate-binding periplasmic protein UgpB (438 aa).

Positions 1-23 (MISLRHTALGLALSLAFTGQALA) are cleaved as a signal peptide. 7 residues coordinate sn-glycerol 3-phosphate: tyrosine 65, glutamate 89, serine 144, serine 270, glycine 307, tyrosine 346, and arginine 397.

The protein belongs to the bacterial solute-binding protein 1 family. As to quaternary structure, the complex is composed of two ATP-binding proteins (UgpC), two transmembrane proteins (UgpA and UgpE) and a solute-binding protein (UgpB).

It localises to the periplasm. Part of the ABC transporter complex UgpBAEC involved in sn-glycerol-3-phosphate (G3P) import. Binds G3P. The polypeptide is sn-glycerol-3-phosphate-binding periplasmic protein UgpB (ugpB) (Salmonella typhi).